The chain runs to 289 residues: Nucleotide-binding protein CHY_0272 (289 aa).

8–15 (GLSGAGKT) provides a ligand contact to ATP. 59-62 (DVRG) provides a ligand contact to GTP.

It belongs to the RapZ-like family.

Its function is as follows. Displays ATPase and GTPase activities. The polypeptide is Nucleotide-binding protein CHY_0272 (Carboxydothermus hydrogenoformans (strain ATCC BAA-161 / DSM 6008 / Z-2901)).